Here is a 215-residue protein sequence, read N- to C-terminus: Intraflagellar transport protein 43 homolog B (215 aa).

A disordered region spans residues Met-1–Ile-107.

Belongs to the IFT43 family. Component of IFT complex A.

In terms of biological role, component of IFT complex A (IFT-A) involved in retrograde ciliary transport along microtubules from the ciliary tip to the base. The polypeptide is Intraflagellar transport protein 43 homolog B (ift43b) (Salmo salar (Atlantic salmon)).